Here is a 664-residue protein sequence, read N- to C-terminus: DNA ligase (664 aa).

NAD(+) contacts are provided by residues 32 to 36 and 80 to 81; these read DKEYD and SL. Catalysis depends on Lys-122, which acts as the N6-AMP-lysine intermediate. Positions 144, 178, and 314 each coordinate NAD(+). Positions 407, 410, 423, and 429 each coordinate Zn(2+). One can recognise a BRCT domain in the interval 587–664; the sequence is IDENPFMGKT…NEEEFSNKIK (78 aa).

The protein belongs to the NAD-dependent DNA ligase family. LigA subfamily. Mg(2+) serves as cofactor. Requires Mn(2+) as cofactor.

The enzyme catalyses NAD(+) + (deoxyribonucleotide)n-3'-hydroxyl + 5'-phospho-(deoxyribonucleotide)m = (deoxyribonucleotide)n+m + AMP + beta-nicotinamide D-nucleotide.. Its function is as follows. DNA ligase that catalyzes the formation of phosphodiester linkages between 5'-phosphoryl and 3'-hydroxyl groups in double-stranded DNA using NAD as a coenzyme and as the energy source for the reaction. It is essential for DNA replication and repair of damaged DNA. In Clostridium botulinum (strain 657 / Type Ba4), this protein is DNA ligase.